We begin with the raw amino-acid sequence, 362 residues long: Methylthioribose-1-phosphate isomerase (362 aa).

D252 (proton donor) is an active-site residue.

This sequence belongs to the eIF-2B alpha/beta/delta subunits family. MtnA subfamily.

It localises to the cytoplasm. Its subcellular location is the nucleus. The enzyme catalyses 5-(methylsulfanyl)-alpha-D-ribose 1-phosphate = 5-(methylsulfanyl)-D-ribulose 1-phosphate. It functions in the pathway amino-acid biosynthesis; L-methionine biosynthesis via salvage pathway; L-methionine from S-methyl-5-thio-alpha-D-ribose 1-phosphate: step 1/6. Functionally, catalyzes the interconversion of methylthioribose-1-phosphate (MTR-1-P) into methylthioribulose-1-phosphate (MTRu-1-P). This Drosophila virilis (Fruit fly) protein is Methylthioribose-1-phosphate isomerase.